A 68-amino-acid chain; its full sequence is DNA-directed RNA polymerase subunit Rpo10 (68 aa).

Residues Cys-7, Cys-10, Cys-44, and Cys-45 each coordinate Zn(2+).

Belongs to the archaeal Rpo10/eukaryotic RPB10 RNA polymerase subunit family. In terms of assembly, part of the RNA polymerase complex. The cofactor is Zn(2+).

It is found in the cytoplasm. The catalysed reaction is RNA(n) + a ribonucleoside 5'-triphosphate = RNA(n+1) + diphosphate. Functionally, DNA-dependent RNA polymerase (RNAP) catalyzes the transcription of DNA into RNA using the four ribonucleoside triphosphates as substrates. The protein is DNA-directed RNA polymerase subunit Rpo10 of Methanococcus maripaludis (strain C6 / ATCC BAA-1332).